An 814-amino-acid polypeptide reads, in one-letter code: MAIKLNGSSRSFVPSLRVSAFLIFIFFVITYIIIYNVSFSEPSWITQDALKQNIENLDDYDASCSGYSIGRILREQKRILASVRLELTESQVKIEEIRTVQEELQRLIPQKQLELSALEGEIEAAQRQLEELRETQNVKVFLPFSPLQIPRELEQPSQISPNQLDDIIDYSRCSISSFMPVYVDIITSGQSEKEWLNVFQEVIPNLVETPDKACIKIHISNGIASPNTTFNSILFNVGSPIINFQSKSIHVQASKIRSFDFPVDVNHIAVEKVDLTPLLPFQRENLISLIVDNTELNFSAFSSLSAEPSRRPIVIVKCSQENCSLERRRQLIGSSTFCFLLPSEMFFQDFLSSLQLGCIPIILSNSQLLPFQDLIDWRRATYRLPLARLPEAHFIVQSFEISDIIEMRRVGRLFYETYLADRHLLARSLLAALRYKLQIPTREVRRNQAIPLFNSSFTAPKGSVVNVQANFDDEYLLGPLESRVESTSYAYNFTEFQLYSYDFWNIIMSPHYTKEFLVNAAELPTEAEFFEDTKIGFRPIEPGSGAEFSKALGGNRQREQFTVVLLTYERDAVLTGALERLHQLPYLNKIIVVWNNVNRDPPDTWPSLHIPVEFIRVAENNLNNRFVPWDRIETEAVLSLDDDIDLMQQEIILAFRVWRENRDRIVGFPARHHARYGDSMFYNSNHTCQMSMILTGAAFIHKNYLTAYTYEMPAEIREHVNSIKNCEDIAMNYLVSHLTRKPPIKTTSRWTLKCPTCTESLYKEGTHFEKRHECMRLFTKIYGYNPLKFSQFRADSILFKTRLPQNHQKCFKYV.

The Cytoplasmic segment spans residues Met1–Pro14. Residues Ser15 to Tyr35 form a helical; Signal-anchor for type II membrane protein membrane-spanning segment. Residues Asn36, Asn227, Asn297, Asn322, Asn454, and Asn492 are each glycosylated (N-linked (GlcNAc...) asparagine). Residues Asn36–Val814 lie on the Lumenal side of the membrane. Residues Arg570, Asn595, Asn620, Arg625, Asp641, Asp642, and Asp643 each contribute to the UDP-N-acetyl-alpha-D-glucosamine site. Asp643 is a Mn(2+) binding site. A glycan (N-linked (GlcNAc...) asparagine) is linked at Asn685. An intrachain disulfide couples Cys726 to Cys774. Positions 727, 728, and 771 each coordinate UDP-N-acetyl-alpha-D-glucosamine. Asp728 is a catalytic residue.

This sequence belongs to the glycosyltransferase 47 family. In terms of assembly, interacts with rib-1. Mn(2+) serves as cofactor.

It localises to the endoplasmic reticulum membrane. The protein localises to the golgi apparatus membrane. It catalyses the reaction 3-O-(beta-D-GlcA-(1-&gt;3)-beta-D-Gal-(1-&gt;3)-beta-D-Gal-(1-&gt;4)-beta-D-Xyl)-L-seryl-[protein] + UDP-N-acetyl-alpha-D-glucosamine = 3-O-(alpha-D-GlcNAc-(1-&gt;4)-beta-D-GlcA-(1-&gt;3)-beta-D-Gal-(1-&gt;3)-beta-D-Gal-(1-&gt;4)-beta-D-Xyl)-L-seryl-[protein] + UDP + H(+). It carries out the reaction 3-O-{[(1-&gt;4)-beta-D-GlcA-(1-&gt;4)-alpha-D-GlcNAc](n)-(1-&gt;4)-beta-D-GlcA-(1-&gt;3)-beta-D-Gal-(1-&gt;3)-beta-D-Gal-(1-&gt;4)-beta-D-Xyl}-L-seryl-[protein] + UDP-N-acetyl-alpha-D-glucosamine = 3-O-{alpha-D-GlcNAc-[(1-&gt;4)-beta-D-GlcA-(1-&gt;4)-alpha-D-GlcNAc](n)-(1-&gt;4)-beta-D-GlcA-(1-&gt;3)-beta-D-Gal-(1-&gt;3)-beta-D-Gal-(1-&gt;4)-beta-D-Xyl}-L-seryl-[protein] + UDP + H(+). The enzyme catalyses 3-O-{alpha-D-GlcNAc-[(1-&gt;4)-beta-D-GlcA-(1-&gt;4)-alpha-D-GlcNAc](n)-(1-&gt;4)-beta-D-GlcA-(1-&gt;3)-beta-D-Gal-(1-&gt;3)-beta-D-Gal-(1-&gt;4)-beta-D-Xyl}-L-seryl-[protein] + UDP-alpha-D-glucuronate = 3-O-{[(1-&gt;4)-beta-D-GlcA-(1-&gt;4)-alpha-D-GlcNAc](n+1)-(1-&gt;4)-beta-D-GlcA-(1-&gt;3)-beta-D-Gal-(1-&gt;3)-beta-D-Gal-(1-&gt;4)-beta-D-Xyl}-L-seryl-[protein] + UDP + H(+). Its pathway is glycan metabolism; heparan sulfate biosynthesis. Its activity is regulated as follows. Binding to rib-1 is required for GlcAT-II activity and for increasing GlcNAc-II activity in vitro. Glycosyltransferase required for the biosynthesis of heparan sulfate. Initiates heparan sulfate synthesis by transferring GlcNAc to the (GlcA-Gal-Gal-Xyl-)Ser core linker (GlcNAcT-I activity). In association with rib-1, is also responsible for the alternating addition of beta-1-4-linked glucuronic acid (GlcA) and alpha-1-4-linked N-acetylglucosamine (GlcNAc) units to nascent heparan sulfate chains (GlcNAcT-II and GlcAT-II activities). Required for normal ventral epidermal enclosure during the early stages of embryonic development. In addition, involved in the elongation of the pharyngeal isthmus during the later stages of embryonic development. Involved in the directed migration of hermaphrodite-specific neurons. The sequence is that of Exostosin-like-3 homolog (rib-2) from Caenorhabditis elegans.